Here is an 88-residue protein sequence, read N- to C-terminus: MAHKKGASSSRNGRDSNAQRLGVKRFGGQVVKAGEILVRQRGTHFHPGVNVGRGGDDTLFATAPGAVEFGTKRGRKYVNIVRTVRSEA.

A disordered region spans residues Met1–Gly22. The span at Ala7–Gln19 shows a compositional bias: polar residues.

It belongs to the bacterial ribosomal protein bL27 family.

This is Large ribosomal subunit protein bL27 from Mycolicibacterium gilvum (strain PYR-GCK) (Mycobacterium gilvum (strain PYR-GCK)).